The following is a 357-amino-acid chain: DNA integrity scanning protein DisA (357 aa).

Residues Arg-3–Ser-141 form the DAC domain. Residues Gly-70, Leu-88, and Thr-101–Ser-105 each bind ATP.

The protein belongs to the DisA family. Homooctamer. Mg(2+) serves as cofactor.

It carries out the reaction 2 ATP = 3',3'-c-di-AMP + 2 diphosphate. Its function is as follows. Participates in a DNA-damage check-point. DisA forms globular foci that rapidly scan along the chromosomes searching for lesions. Functionally, also has diadenylate cyclase activity, catalyzing the condensation of 2 ATP molecules into cyclic di-AMP (c-di-AMP). c-di-AMP likely acts as a signaling molecule that may couple DNA integrity with a cellular process. This chain is DNA integrity scanning protein DisA, found in Mycobacterium avium (strain 104).